A 399-amino-acid polypeptide reads, in one-letter code: Probable sugar efflux transporter (399 aa).

12 helical membrane-spanning segments follow: residues 15-35 (VVTL…PVGL), 50-70 (VGMM…PFML), 81-101 (LIGL…AWSF), 103-123 (VLVI…SITS), 136-156 (AQAL…GIPI), 168-188 (MTFL…VKLL), 209-229 (PALV…YTAY), 246-266 (FATV…ILFG), 273-293 (ASGL…LLLP), 301-321 (LMLL…GMQV), 333-353 (VAMS…ALVG), and 364-384 (SIGY…LMIF).

It belongs to the major facilitator superfamily. SotB (TC 2.A.1.2) family.

The protein localises to the cell inner membrane. In terms of biological role, involved in the efflux of sugars. The physiological role may be the reduction of the intracellular concentration of toxic sugars or sugar metabolites. In Klebsiella pneumoniae (strain 342), this protein is Probable sugar efflux transporter.